A 153-amino-acid chain; its full sequence is MKFCKPKPKSILSLDIGNKRIGLAYCDPLCITSNILPAVKRFKNNQEIKIIRNYINEYNLTGFIVGIPLDERGQMTTQAIDCKNYGQLLSYELRLPFSFVNEHSSTWESSNRFGIKKDKSGLIDSFSAKIILEQWIEEGPELEEIAGKPQIKY.

This sequence belongs to the YqgF nuclease family.

The protein localises to the cytoplasm. Its function is as follows. Could be a nuclease involved in processing of the 5'-end of pre-16S rRNA. This Prochlorococcus marinus (strain MIT 9215) protein is Putative pre-16S rRNA nuclease.